A 143-amino-acid polypeptide reads, in one-letter code: Deoxyuridine 5'-triphosphate nucleotidohydrolase (143 aa).

Residues Ser65, Val78, Arg132, and Gly138 each coordinate dUMP.

It belongs to the dUTPase family. In terms of assembly, homotrimer. It depends on Mg(2+) as a cofactor.

The catalysed reaction is dUTP + H2O = dUMP + diphosphate + H(+). It functions in the pathway pyrimidine metabolism; dUMP biosynthesis; dUMP from dCTP (dUTP route): step 2/2. Its function is as follows. Involved in nucleotide metabolism via production of dUMP, the immediate precursor of thymidine nucleotides, and decreases the intracellular concentration of dUTP so that uracil cannot be incorporated into DNA. In Antonospora locustae (Microsporidian parasite), this protein is Deoxyuridine 5'-triphosphate nucleotidohydrolase (DUT1).